Consider the following 796-residue polypeptide: Peroxisome proliferator-activated receptor gamma coactivator 1-alpha (796 aa).

Lysine 77 is subject to N6-acetyllysine. The segment at 98–138 is disordered; it reads PVDEDGLPSFDALTDGDVTTENEASPSSMPDGTPPPQEAEE. Over residues 114 to 127 the composition is skewed to polar residues; that stretch reads DVTTENEASPSSMP. The short motif at 142-146 is the LXXLL motif element; sequence LKKLL. Lysine 144 carries the post-translational modification N6-acetyllysine. Residue threonine 176 is modified to Phosphothreonine; by AMPK. Lysine 182 is modified (N6-acetyllysine). The segment at 211 to 274 is disordered; that stretch reads YLTTNDDPPH…PNDPKGSPFE (64 aa). Positions 217–235 are enriched in basic and acidic residues; the sequence is DPPHTKPTETRNSSRDKCT. Residues 242–258 are compositionally biased toward polar residues; that stretch reads TQSQSQHLQAKPTSLSL. Lysine 252, lysine 269, lysine 276, and lysine 319 each carry N6-acetyllysine. Residues 288–349 form a disordered region; it reads GTAGLTPPTT…NNSTKKGPEQ (62 aa). The interval 291–337 is interaction with PPARG; it reads GLTPPTTPPHKANQDNPFRASPKLKPPCKTVVPPPSKKTRYSESSGT. Positions 332 to 344 are enriched in polar residues; that stretch reads SESSGTHGNNSTK. N6-acetyllysine is present on residues lysine 345, lysine 411, and lysine 449. The tract at residues 348 to 796 is mediates interaction with RNF34; sequence EQSELYAQLS…LKEAQRSLRR (449 aa). The disordered stretch occupies residues 463 to 487; sequence HFGHPSQAVFDDEADKTSELRDSDF. The span at 477-486 shows a compositional bias: basic and acidic residues; the sequence is DKTSELRDSD. Serine 537 is subject to Phosphoserine; by AMPK. Disordered regions lie at residues 541–637 and 648–667; these read FNSP…SYEE and YRRE…ERQR. Over residues 568-603 the composition is skewed to low complexity; sequence RSFSQHRSCSRSPYSRSRSRSPGSRSSSRSCYYSES. Over residues 620-629 the composition is skewed to basic residues; that stretch reads SRSRSPYSRR. Positions 675–751 constitute an RRM domain; the sequence is RVIYVGKIRP…TDFELYFCGR (77 aa). 2 positions are modified to N6-acetyllysine: lysine 756 and lysine 777.

In terms of assembly, homooligomer. Interacts with MYBBP1A; inhibits MYBBP1A transcriptional activation. Interacts with PRDM16, LPIN1 and PML. Interacts (via LXXLL motif) with RORA and RORC (via AF-2 motif); activates RORA and RORC transcriptional activation. Interacts with LRPPRC. Interacts with FOXO1. Interacts with NR5A2. Post-translationally, phosphorylation by AMPK in skeletal muscle increases activation of its own promoter. Phosphorylated by CLK2. In terms of processing, heavily acetylated by KAT2A/GCN5 under conditions of high nutrients, leading to inactivation of PPARGC1A. Deacetylated by SIRT1 in low nutrients/high NAD conditions, leading to its activation. Ubiquitinated. Ubiquitination by RNF34 induces proteasomal degradation.

The protein localises to the nucleus. It localises to the PML body. In terms of biological role, transcriptional coactivator for steroid receptors and nuclear receptors. Greatly increases the transcriptional activity of PPARG and thyroid hormone receptor on the uncoupling protein promoter. Can regulate key mitochondrial genes that contribute to the program of adaptive thermogenesis. Plays an essential role in metabolic reprogramming in response to dietary availability through coordination of the expression of a wide array of genes involved in glucose and fatty acid metabolism. Acts as a key regulator of gluconeogenesis: stimulates hepatic gluconeogenesis by increasing the expression of gluconeogenic enzymes, and acting together with FOXO1 to promote the fasting gluconeogenic program. Induces the expression of PERM1 in the skeletal muscle in an ESRRA-dependent manner. Also involved in the integration of the circadian rhythms and energy metabolism. Required for oscillatory expression of clock genes, such as BMAL1 and NR1D1, through the coactivation of RORA and RORC, and metabolic genes, such as PDK4 and PEPCK. In Sus scrofa (Pig), this protein is Peroxisome proliferator-activated receptor gamma coactivator 1-alpha (PPARGC1A).